Here is a 1525-residue protein sequence, read N- to C-terminus: Multidrug resistance-associated protein 1 (1525 aa).

At 1–33 (MGIESLCSADASEPFWDWNLTWHTENPDFTQCF) the chain is on the extracellular side. The chain crosses the membrane as a helical span at residues 34–54 (QNTVLVWVPCIYLWVCFPAYF). Over 55–74 (LYLRSHDRGYIQMSILNKAK) the chain is Cytoplasmic. Residues 75 to 95 (TALGLILWIVCWADLFYSFWE) form a helical membrane-spanning segment. At 96–100 (RSQNI) the chain is on the extracellular side. Residues 101 to 121 (FRAPFFLISPTVLGITMLLAT) form a helical membrane-spanning segment. Residues 122 to 133 (FLIQHERLKGVQ) lie on the Cytoplasmic side of the membrane. Residues 134–154 (SSGVMMIFWLISLLCATVIFR) traverse the membrane as a helical segment. The Extracellular segment spans residues 155–172 (SKIMLALNTDTEVDAFRY). A helical membrane pass occupies residues 173-193 (VTFCTYFILLLVQLILSCFPE). The Cytoplasmic portion of the chain corresponds to 194-315 (KPPLFSEAVN…RSSEASLSKV (122 aa)). A helical transmembrane segment spans residues 316–336 (LYKTFGPYFLMSFLFKAAHDL). The ABC transmembrane type-1 1 domain maps to 324–607 (FLMSFLFKAA…LPMVISSIVE (284 aa)). The Extracellular segment spans residues 337-362 (LMFTGPEILKLLINFVNNKSAPNWQG). Residues 363–383 (YFYTGLLFVCACLQTLILHQY) traverse the membrane as a helical segment. The Cytoplasmic portion of the chain corresponds to 384–439 (FHICFVTGMRLKTAIVGVIYRKALVITNSARKTSTVGEIVNLMSVDAQRFMDLATY). A helical membrane pass occupies residues 440 to 460 (INMIWSAPLQVILALYLLWRN). Residues 461 to 463 (LGP) lie on the Extracellular side of the membrane. A helical transmembrane segment spans residues 464-484 (SVLAGVAVMILLVPINAVMAM). Residues 485–546 (KTKTYQVAQM…VLKKSAYLAA (62 aa)) lie on the Cytoplasmic side of the membrane. A helical transmembrane segment spans residues 547–567 (MGTFTWVCAPFLVALSTFAVY). Topologically, residues 568–589 (VKVNKNNILDAQKAFVSLALFN) are extracellular. The helical transmembrane segment at 590–610 (ILRFPLNILPMVISSIVEASV) threads the bilayer. The Cytoplasmic segment spans residues 611–961 (SLKRLRVFLS…VKATVYWEYM (351 aa)). One can recognise an ABC transporter 1 domain in the interval 641–865 (IVVKNATFSW…DGAFAEFLRT (225 aa)). Residue 675–682 (GQVGCGKS) coordinates ATP. Composition is skewed to polar residues over residues 871–882 (QSMESSDASSPS) and 908–928 (SNSS…STAE). Disordered stretches follow at residues 871 to 891 (QSME…PVEN) and 908 to 930 (SNSS…AELQ). A helical transmembrane segment spans residues 962-982 (KAIGLYISFLSVFLFMCNHIA). Residues 969 to 1250 (SFLSVFLFMC…LVRMTSDLET (282 aa)) enclose the ABC transmembrane type-1 2 domain. Over 983 to 1019 (SLASNYWLSLWTDDPVVNGTQQYTNVRLGVYGALGIS) the chain is Extracellular. The chain crosses the membrane as a helical span at residues 1020-1040 (QGIAVFGYSMAVSIGGIFASR). Over 1041-1083 (HLHLDLLHNVLRSPMSFFERTPSGNLVSRFSKEIDTIDSTIPP) the chain is Cytoplasmic. The chain crosses the membrane as a helical span at residues 1084 to 1104 (IIKMFMGSTFNVIGACIIILL). A topological domain (extracellular) is located at residue Ala-1105. A helical membrane pass occupies residues 1106–1126 (TPIAAVVIPPLGLVYLLVQRF). Residues 1127–1197 (YVATSRQLKR…VANRWLAVRL (71 aa)) lie on the Cytoplasmic side of the membrane. Residues 1198-1218 (EFVGNCIVLFAALFAVIARNK) traverse the membrane as a helical segment. Residues 1219 to 1220 (LS) are Extracellular-facing. A helical membrane pass occupies residues 1221 to 1241 (PGLIGLSVSYSLQITAYLNWL). Residues 1242-1525 (VRMTSDLETN…YSMAKDSGLA (284 aa)) are Cytoplasmic-facing. The ABC transporter 2 domain occupies 1289–1521 (FRGFGLRYRE…KGLFYSMAKD (233 aa)). 1321 to 1328 (GRTGAGKS) is a binding site for ATP.

Belongs to the ABC transporter superfamily. ABCC family. Conjugate transporter (TC 3.A.1.208) subfamily.

Its subcellular location is the cell membrane. It catalyses the reaction ATP + H2O + xenobioticSide 1 = ADP + phosphate + xenobioticSide 2.. The enzyme catalyses an S-substituted glutathione(in) + ATP + H2O = an S-substituted glutathione(out) + ADP + phosphate + H(+). It carries out the reaction sphing-4-enine 1-phosphate(in) + ATP + H2O = sphing-4-enine 1-phosphate(out) + ADP + phosphate + H(+). The catalysed reaction is leukotriene C4(in) + ATP + H2O = leukotriene C4(out) + ADP + phosphate + H(+). It catalyses the reaction 17beta-estradiol 17-O-(beta-D-glucuronate)(in) + ATP + H2O = 17beta-estradiol 17-O-(beta-D-glucuronate)(out) + ADP + phosphate + H(+). The enzyme catalyses 2',3'-cGAMP(in) + ATP + H2O = 2',3'-cGAMP(out) + ADP + phosphate + H(+). Mediates export of organic anions and drugs from the cytoplasm. Mediates ATP-dependent transport of glutathione and glutathione conjugates, leukotriene C4, estradiol-17-beta-o-glucuronide and other xenobiotics. Hydrolyzes ATP with low efficiency. Mediates ATP-dependent, GSH-independent cyclic GMP-AMP (cGAMP) export. Thus, by limiting intracellular cGAMP concentrations negatively regulates the cGAS-STING pathway. In Gallus gallus (Chicken), this protein is Multidrug resistance-associated protein 1.